The chain runs to 368 residues: tRNA/tmRNA (uracil-C(5))-methyltransferase (368 aa).

S-adenosyl-L-methionine is bound by residues Gln192, Tyr220, Asn225, Glu241, and Asp301. Catalysis depends on Cys326, which acts as the Nucleophile. The Proton acceptor role is filled by Glu360.

Belongs to the class I-like SAM-binding methyltransferase superfamily. RNA M5U methyltransferase family. TrmA subfamily.

The enzyme catalyses uridine(54) in tRNA + S-adenosyl-L-methionine = 5-methyluridine(54) in tRNA + S-adenosyl-L-homocysteine + H(+). It carries out the reaction uridine(341) in tmRNA + S-adenosyl-L-methionine = 5-methyluridine(341) in tmRNA + S-adenosyl-L-homocysteine + H(+). Dual-specificity methyltransferase that catalyzes the formation of 5-methyluridine at position 54 (m5U54) in all tRNAs, and that of position 341 (m5U341) in tmRNA (transfer-mRNA). This is tRNA/tmRNA (uracil-C(5))-methyltransferase from Actinobacillus pleuropneumoniae serotype 3 (strain JL03).